The following is a 474-amino-acid chain: 3-isopropylmalate dehydratase large subunit (474 aa).

Residues C353, C414, and C417 each contribute to the [4Fe-4S] cluster site.

Belongs to the aconitase/IPM isomerase family. LeuC type 1 subfamily. In terms of assembly, heterodimer of LeuC and LeuD. [4Fe-4S] cluster is required as a cofactor.

It catalyses the reaction (2R,3S)-3-isopropylmalate = (2S)-2-isopropylmalate. It functions in the pathway amino-acid biosynthesis; L-leucine biosynthesis; L-leucine from 3-methyl-2-oxobutanoate: step 2/4. Catalyzes the isomerization between 2-isopropylmalate and 3-isopropylmalate, via the formation of 2-isopropylmaleate. This chain is 3-isopropylmalate dehydratase large subunit, found in Xylella fastidiosa (strain 9a5c).